We begin with the raw amino-acid sequence, 129 residues long: Small ribosomal subunit protein uS11 (129 aa).

Belongs to the universal ribosomal protein uS11 family. As to quaternary structure, part of the 30S ribosomal subunit. Interacts with proteins S7 and S18. Binds to IF-3.

Its function is as follows. Located on the platform of the 30S subunit, it bridges several disparate RNA helices of the 16S rRNA. Forms part of the Shine-Dalgarno cleft in the 70S ribosome. This chain is Small ribosomal subunit protein uS11, found in Bacillus anthracis (strain A0248).